The following is a 591-amino-acid chain: Myelin expression factor 2 (591 aa).

Residues methionine 1 to arginine 92 are disordered. Residues glutamate 22 to proline 36 show a composition bias toward basic and acidic residues. A Glycyl lysine isopeptide (Lys-Gly) (interchain with G-Cter in SUMO2) cross-link involves residue lysine 44. Composition is skewed to basic and acidic residues over residues methionine 45–threonine 63 and tyrosine 74–glycine 87. RRM domains are found at residues asparagine 91–aspartate 169 and serine 224–lysine 301. An omega-N-methylarginine mark is found at arginine 397 and arginine 417. At serine 422 the chain carries Phosphoserine. The region spanning asparagine 514–asparagine 590 is the RRM 3 domain.

Monomer. Highly expressed in the brain.

The protein localises to the nucleus. Functionally, transcriptional repressor of the myelin basic protein gene (MBP). Binds to the proximal MB1 element 5'-TTGTCC-3' of the MBP promoter. Its binding to MB1 and function are inhibited by PURA. This is Myelin expression factor 2 (Myef2) from Mus musculus (Mouse).